A 398-amino-acid chain; its full sequence is Succinate--CoA ligase [ADP-forming] subunit beta (398 aa).

The ATP-grasp domain maps to 9–254; the sequence is KRLLHTYGAP…LSEEDEKEIE (246 aa). ATP-binding positions include K46, 53–55, E109, A112, and E117; that span reads GRG. Positions 209 and 223 each coordinate Mg(2+). Substrate contacts are provided by residues N274 and 331–333; that span reads GIM.

The protein belongs to the succinate/malate CoA ligase beta subunit family. In terms of assembly, heterotetramer of two alpha and two beta subunits. The cofactor is Mg(2+).

It carries out the reaction succinate + ATP + CoA = succinyl-CoA + ADP + phosphate. The catalysed reaction is GTP + succinate + CoA = succinyl-CoA + GDP + phosphate. The protein operates within carbohydrate metabolism; tricarboxylic acid cycle; succinate from succinyl-CoA (ligase route): step 1/1. In terms of biological role, succinyl-CoA synthetase functions in the citric acid cycle (TCA), coupling the hydrolysis of succinyl-CoA to the synthesis of either ATP or GTP and thus represents the only step of substrate-level phosphorylation in the TCA. The beta subunit provides nucleotide specificity of the enzyme and binds the substrate succinate, while the binding sites for coenzyme A and phosphate are found in the alpha subunit. The protein is Succinate--CoA ligase [ADP-forming] subunit beta of Brucella anthropi (strain ATCC 49188 / DSM 6882 / CCUG 24695 / JCM 21032 / LMG 3331 / NBRC 15819 / NCTC 12168 / Alc 37) (Ochrobactrum anthropi).